The primary structure comprises 460 residues: Glutamyl-tRNA reductase (460 aa).

Residues 48–51 (TCNR), Ser-100, 105–107 (EDQ), and Gln-111 contribute to the substrate site. The active-site Nucleophile is Cys-49. Residue 180-185 (GAGEIG) coordinates NADP(+).

Belongs to the glutamyl-tRNA reductase family. Homodimer.

The enzyme catalyses (S)-4-amino-5-oxopentanoate + tRNA(Glu) + NADP(+) = L-glutamyl-tRNA(Glu) + NADPH + H(+). It functions in the pathway porphyrin-containing compound metabolism; protoporphyrin-IX biosynthesis; 5-aminolevulinate from L-glutamyl-tRNA(Glu): step 1/2. Its function is as follows. Catalyzes the NADPH-dependent reduction of glutamyl-tRNA(Glu) to glutamate 1-semialdehyde (GSA). In Methanosarcina acetivorans (strain ATCC 35395 / DSM 2834 / JCM 12185 / C2A), this protein is Glutamyl-tRNA reductase.